The following is a 204-amino-acid chain: Imidazoleglycerol-phosphate dehydratase (204 aa).

The protein belongs to the imidazoleglycerol-phosphate dehydratase family.

It is found in the cytoplasm. It catalyses the reaction D-erythro-1-(imidazol-4-yl)glycerol 3-phosphate = 3-(imidazol-4-yl)-2-oxopropyl phosphate + H2O. It functions in the pathway amino-acid biosynthesis; L-histidine biosynthesis; L-histidine from 5-phospho-alpha-D-ribose 1-diphosphate: step 6/9. The polypeptide is Imidazoleglycerol-phosphate dehydratase (Corynebacterium urealyticum (strain ATCC 43042 / DSM 7109)).